Consider the following 200-residue polypeptide: Probable molybdenum cofactor guanylyltransferase (200 aa).

GTP-binding positions include 9 to 11, Lys21, Asp69, and Asp100; that span reads LAG. Asp100 contributes to the Mg(2+) binding site.

This sequence belongs to the MobA family. Mg(2+) serves as cofactor.

It localises to the cytoplasm. The enzyme catalyses Mo-molybdopterin + GTP + H(+) = Mo-molybdopterin guanine dinucleotide + diphosphate. Transfers a GMP moiety from GTP to Mo-molybdopterin (Mo-MPT) cofactor (Moco or molybdenum cofactor) to form Mo-molybdopterin guanine dinucleotide (Mo-MGD) cofactor. The sequence is that of Probable molybdenum cofactor guanylyltransferase from Bacillus cereus (strain AH187).